A 249-amino-acid polypeptide reads, in one-letter code: Gamma-glutamyl peptidase 3 (249 aa).

One can recognise a Glutamine amidotransferase type-1 domain in the interval 19–217; the sequence is SEFVKKTYGG…VDRVLNMKLM (199 aa). Cysteine 103 functions as the Nucleophile in the catalytic mechanism. Residues histidine 196 and glutamate 198 contribute to the active site.

The protein belongs to the peptidase C26 family.

The protein resides in the cytoplasm. The protein localises to the cytosol. It catalyses the reaction an S-[(1E)-1-(hydroxyimino)-omega-(methylsulfanyl)alkyl]-L-glutathione + H2O = an S-[(1E)-1-(hydroxyimino)-omega-(methylsulfanyl)alkyl]-L-cysteinylglycine + L-glutamate. The enzyme catalyses (E)-1-(glutathione-S-yl)-2-(1H-indol-3-yl)acetohydroximate + H2O = (E)-1-(glycyl-L-cystein-S-yl)-2-(1H-indol-3-yl)acetohydroximate + L-glutamate. The catalysed reaction is 2-(glutathion-S-yl)-2-(1H-indol-3-yl)acetonitrile + H2O = 2-(glycyl-L-cystein-S-yl)-2-(1H-indol-3-yl)acetonitrile + L-glutamate. It carries out the reaction (Z)-1-(glutathione-S-yl)-2-phenylacetohydroximate + H2O = (Z)-1-(glycyl-L-cystein-S-yl)-2-phenylacetohydroximate + L-glutamate. Its pathway is secondary metabolite biosynthesis. Its function is as follows. Involved in glucosinolate biosynthesis. Hydrolyzes the gamma-glutamyl peptide bond of several glutathione (GSH) conjugates to produce Cys-Gly conjugates related to glucosinolates. The gamma-Glu-Cys-Gly-GSH conjugates are the sulfur-donating molecule in glucosinolate biosynthesis. Can use the GSH conjugate of the camalexin intermediate IAN (GS-IAN) as substrate. Required for the biosynthesis of camalexin, a pathogen-inducible phytoalexin with antibacterial and antifungal properties. In Arabidopsis thaliana (Mouse-ear cress), this protein is Gamma-glutamyl peptidase 3.